Here is a 541-residue protein sequence, read N- to C-terminus: Chaperonin GroEL (541 aa).

ATP is bound by residues 29-32 (TIGP), 86-90 (DGTTT), glycine 413, and aspartate 494.

It belongs to the chaperonin (HSP60) family. As to quaternary structure, forms a cylinder of 14 subunits composed of two heptameric rings stacked back-to-back. Interacts with the co-chaperonin GroES.

It is found in the cytoplasm. It carries out the reaction ATP + H2O + a folded polypeptide = ADP + phosphate + an unfolded polypeptide.. In terms of biological role, together with its co-chaperonin GroES, plays an essential role in assisting protein folding. The GroEL-GroES system forms a nano-cage that allows encapsulation of the non-native substrate proteins and provides a physical environment optimized to promote and accelerate protein folding. This is Chaperonin GroEL from Lachnospira eligens (strain ATCC 27750 / DSM 3376 / VPI C15-48 / C15-B4) (Eubacterium eligens).